The sequence spans 399 residues: Succinate--CoA ligase [ADP-forming] subunit beta (399 aa).

The ATP-grasp domain occupies K9–E254. ATP is bound by residues K46, G53–G55, E109, S112, and E117. Residues N209 and D223 each contribute to the Mg(2+) site. Substrate contacts are provided by residues N274 and G331–M333.

Belongs to the succinate/malate CoA ligase beta subunit family. Heterotetramer of two alpha and two beta subunits. The cofactor is Mg(2+).

The catalysed reaction is succinate + ATP + CoA = succinyl-CoA + ADP + phosphate. The enzyme catalyses GTP + succinate + CoA = succinyl-CoA + GDP + phosphate. Its pathway is carbohydrate metabolism; tricarboxylic acid cycle; succinate from succinyl-CoA (ligase route): step 1/1. Its function is as follows. Succinyl-CoA synthetase functions in the citric acid cycle (TCA), coupling the hydrolysis of succinyl-CoA to the synthesis of either ATP or GTP and thus represents the only step of substrate-level phosphorylation in the TCA. The beta subunit provides nucleotide specificity of the enzyme and binds the substrate succinate, while the binding sites for coenzyme A and phosphate are found in the alpha subunit. The polypeptide is Succinate--CoA ligase [ADP-forming] subunit beta (Rhodopseudomonas palustris (strain BisB18)).